We begin with the raw amino-acid sequence, 342 residues long: MKHLLSTQDLSLHNAIRILDTAEEMSAVGDREVKKLPALRGRTVVNLFFEDSTRTRISFEAAAKRLSADVINFAAKGSSVSKGESLKDTAQTLSAMGADAVVIRHWASGAPHRLAATDWIDAGVINAGDGTHEHPTQALLDAFTMRRHWAKLSGTPSEGADLKGMRVAIAGDVLHSRVARSNVWLLRTLGAEVTLVAPPTLLPIGVEKWPCAVSYDLDETLARGVDAVMMLRVQGERMNASFFPSTREYSRRWGFDDNRLRALDSLGMKDTIIMHPGPMNRGLEISAAAADSPRSTVLAQVRNGVSVRMAALYLLLSGDTRETAAPPVLAAAGTAHSTKESI.

Carbamoyl phosphate-binding residues include Arg54 and Thr55. L-aspartate is bound at residue Lys82. Residues Arg104, His134, and Gln137 each coordinate carbamoyl phosphate. Positions 177 and 232 each coordinate L-aspartate. The carbamoyl phosphate site is built by Gly277 and Pro278.

Belongs to the aspartate/ornithine carbamoyltransferase superfamily. ATCase family. As to quaternary structure, heterododecamer (2C3:3R2) of six catalytic PyrB chains organized as two trimers (C3), and six regulatory PyrI chains organized as three dimers (R2).

The catalysed reaction is carbamoyl phosphate + L-aspartate = N-carbamoyl-L-aspartate + phosphate + H(+). It functions in the pathway pyrimidine metabolism; UMP biosynthesis via de novo pathway; (S)-dihydroorotate from bicarbonate: step 2/3. Catalyzes the condensation of carbamoyl phosphate and aspartate to form carbamoyl aspartate and inorganic phosphate, the committed step in the de novo pyrimidine nucleotide biosynthesis pathway. The chain is Aspartate carbamoyltransferase catalytic subunit from Pseudarthrobacter chlorophenolicus (strain ATCC 700700 / DSM 12829 / CIP 107037 / JCM 12360 / KCTC 9906 / NCIMB 13794 / A6) (Arthrobacter chlorophenolicus).